An 82-amino-acid chain; its full sequence is Sec-independent protein translocase protein TatA (82 aa).

Residues 1–21 (MLGFGPFELILIVVIIALLFG) traverse the membrane as a helical segment. Basic and acidic residues predominate over residues 36–47 (IKEFKQEMHEPS). Positions 36–82 (IKEFKQEMHEPSPPRPQVTDIPSQRLDPVTGAPVSTESTVPASDRRS) are disordered.

The protein belongs to the TatA/E family. As to quaternary structure, forms a complex with TatC.

It localises to the cell membrane. Functionally, part of the twin-arginine translocation (Tat) system that transports large folded proteins containing a characteristic twin-arginine motif in their signal peptide across membranes. TatA could form the protein-conducting channel of the Tat system. The chain is Sec-independent protein translocase protein TatA from Deinococcus deserti (strain DSM 17065 / CIP 109153 / LMG 22923 / VCD115).